A 358-amino-acid chain; its full sequence is Glutamine synthetase (358 aa).

A GS beta-grasp domain is found at 26 to 105 (ILAEYIWIDG…VLAECWNADG (80 aa)). The GS catalytic domain occupies 112–358 (HRHECAKIME…IMMETICGGI (247 aa)).

It belongs to the glutamine synthetase family. In terms of assembly, homooctamer.

It localises to the cytoplasm. It catalyses the reaction L-glutamate + NH4(+) + ATP = L-glutamine + ADP + phosphate + H(+). The chain is Glutamine synthetase (GLN1) from Tuber borchii (White truffle).